The following is a 35-amino-acid chain: Leukocyte cysteine proteinase inhibitor 2 (35 aa).

Residues 1 to 35 (LAGGLTEPRPADTEIQEIANKVKPQLEEKTNKKYD) form a disordered region. A compositionally biased stretch (basic and acidic residues) spans 24–35 (PQLEEKTNKKYD).

The protein belongs to the cystatin family.

It is found in the cytoplasm. In terms of biological role, potent inhibitor of cathepsins L and S, and papain. The protein is Leukocyte cysteine proteinase inhibitor 2 of Sus scrofa (Pig).